Here is a 467-residue protein sequence, read N- to C-terminus: Syntaxin-5 (467 aa).

Disordered regions lie at residues 1–53 and 58–77; these read MQTR…QSLV and GHEA…SIST. The Cytoplasmic segment spans residues 1–445; it reads MQTRRRLHQT…KYFQSVSKNR (445 aa). Over residues 10–22 the composition is skewed to low complexity; sequence TDQQDYSSSSTYT. The segment covering 29 to 45 has biased composition (gly residues); sequence GGAGAGSVGTGTAGGSV. Over residues 68-77 the composition is skewed to polar residues; it reads NYQSGDSIST. Residues 245–269 are a coiled coil; it reads IKGDLNALNQQIARLQDISKDQRRH. Residues 310–335 form a disordered region; sequence QQKTRRDQFSQGPGPLAAHTVSPSTA. The region spanning 375-437 is the t-SNARE coiled-coil homology domain; that stretch reads DNYVQQRAET…EAAHGEILKY (63 aa). A helical; Anchor for type IV membrane protein membrane pass occupies residues 446–466; sequence WLMIKIFGVLIFFFLFFVVFM. Serine 467 is a topological domain (vesicular).

Belongs to the syntaxin family. Homodimer.

It localises to the golgi apparatus. The protein localises to the cis-Golgi network membrane. Mediates endoplasmic reticulum to Golgi transport. This Drosophila melanogaster (Fruit fly) protein is Syntaxin-5.